A 385-amino-acid polypeptide reads, in one-letter code: UPF0284 protein P9301_04631 (385 aa).

It belongs to the UPF0284 family.

This Prochlorococcus marinus (strain MIT 9301) protein is UPF0284 protein P9301_04631.